The sequence spans 137 residues: Competence protein ComGG (137 aa).

Residues 10–30 form a helical membrane-spanning segment; sequence GVLLYAVTIAAIFSLLLQFYL. The disordered stretch occupies residues 106–137; the sequence is EKRDKKEEVATDSSEKVEKKKSEEKPEKKENS.

The transformation pili are flexible filaments, consisting mainly of the major pilin ComGC and smaller amounts of the minor pilins, including at least ComGD, ComGF and ComGG, and perhaps ComGE. Interacts with ComGC; the interaction is probably direct. Interacts with ComGD. Interacts with ComGE. Interacts with ComGF. May act as a link between ComGC, ComGD and ComGF.

The protein resides in the fimbrium. It is found in the cell membrane. Required for formation of the type IV-like pilus (T4P) that plays a role in transformation. Transformation pili are dynamically extended and retracted, perhaps thereby promoting DNA uptake and transformation. Required for transformation. This is Competence protein ComGG from Streptococcus pneumoniae (strain ATCC BAA-255 / R6).